Reading from the N-terminus, the 154-residue chain is Large ribosomal subunit protein uL30 (154 aa).

This sequence belongs to the universal ribosomal protein uL30 family. As to quaternary structure, part of the 50S ribosomal subunit.

The polypeptide is Large ribosomal subunit protein uL30 (Methanocaldococcus jannaschii (strain ATCC 43067 / DSM 2661 / JAL-1 / JCM 10045 / NBRC 100440) (Methanococcus jannaschii)).